A 304-amino-acid polypeptide reads, in one-letter code: HPr kinase/phosphorylase (304 aa).

Catalysis depends on residues H136 and K157. An ATP-binding site is contributed by 151-158; that stretch reads GESGIGKS. S158 contacts Mg(2+). The Proton acceptor; for phosphorylation activity. Proton donor; for dephosphorylation activity role is filled by D175. Residues 198–207 form an important for the catalytic mechanism of both phosphorylation and dephosphorylation region; the sequence is LEVRGIGIID. Residue E199 participates in Mg(2+) binding. The active site involves R240. The segment at 261–266 is important for the catalytic mechanism of dephosphorylation; the sequence is PVRPGR.

This sequence belongs to the HPrK/P family. Homohexamer. The cofactor is Mg(2+).

The catalysed reaction is [HPr protein]-L-serine + ATP = [HPr protein]-O-phospho-L-serine + ADP + H(+). It carries out the reaction [HPr protein]-O-phospho-L-serine + phosphate + H(+) = [HPr protein]-L-serine + diphosphate. Its function is as follows. Catalyzes the ATP- as well as the pyrophosphate-dependent phosphorylation of a specific serine residue in HPr, a phosphocarrier protein of the phosphoenolpyruvate-dependent sugar phosphotransferase system (PTS). HprK/P also catalyzes the pyrophosphate-producing, inorganic phosphate-dependent dephosphorylation (phosphorolysis) of seryl-phosphorylated HPr (P-Ser-HPr). The two antagonistic activities of HprK/P are regulated by several intracellular metabolites, which change their concentration in response to the absence or presence of rapidly metabolisable carbon sources (glucose, fructose, etc.) in the growth medium. Therefore, by controlling the phosphorylation state of HPr, HPrK/P is a sensor enzyme that plays a major role in the regulation of carbon metabolism and sugar transport: it mediates carbon catabolite repression (CCR), and regulates PTS-catalyzed carbohydrate uptake and inducer exclusion. This is HPr kinase/phosphorylase from Clostridium botulinum (strain Alaska E43 / Type E3).